We begin with the raw amino-acid sequence, 141 residues long: Protein X (141 aa).

Residues 24-48 (QSSGPPFPRPSAGSAASPASSLSAS) show a composition bias toward low complexity. Residues 24–51 (QSSGPPFPRPSAGSAASPASSLSASDES) form a disordered region. The interval 68-113 (PCCLVVTCAELRTMDSTVNFVSWHANRQLGMPSKDLWTPYIRDQLL) is mitochondrial targeting sequence.

Belongs to the orthohepadnavirus protein X family. As to quaternary structure, may form homodimer. May interact with host CEBPA, CFLAR, CREB1, DDB1, E4F1, HBXIP, HSPD1/HSP60, NFKBIA, POLR2E and SMAD4. Interacts with host SMC5-SMC6 complex and induces its degradation. Interacts with host TRPC4AP; leading to prevent ubiquitination of TRPC4AP. Interacts with host PLSCR1; this interaction promotes ubiquitination and degradation of HBx and impairs HBx-mediated cell proliferation. Post-translationally, a fraction may be phosphorylated in insect cells and HepG2 cells, a human hepatoblastoma cell line. Phosphorylated in vitro by host protein kinase C or mitogen-activated protein kinase. N-acetylated in insect cells.

It localises to the host cytoplasm. It is found in the host nucleus. The protein resides in the host mitochondrion. In terms of biological role, multifunctional protein that plays a role in silencing host antiviral defenses and promoting viral transcription. Does not seem to be essential for HBV infection. May be directly involved in development of cirrhosis and liver cancer (hepatocellular carcinoma). Most of cytosolic activities involve modulation of cytosolic calcium. The effect on apoptosis is controversial depending on the cell types in which the studies have been conducted. May induce apoptosis by localizing in mitochondria and causing loss of mitochondrial membrane potential. May also modulate apoptosis by binding host CFLAR, a key regulator of the death-inducing signaling complex (DISC). Promotes viral transcription by using the host E3 ubiquitin ligase DDB1 to target the SMC5-SMC6 complex to proteasomal degradation. This host complex would otherwise bind to viral episomal DNA, and prevents its transcription. Moderately stimulates transcription of many different viral and cellular transcription elements. Promoters and enhancers stimulated by HBx contain DNA binding sites for NF-kappa-B, AP-1, AP-2, c-EBP, ATF/CREB, or the calcium-activated factor NF-AT. This Woodchuck hepatitis B virus (isolate 1) (WHV) protein is Protein X.